Here is a 200-residue protein sequence, read N- to C-terminus: dITP/XTP pyrophosphatase (200 aa).

7–12 (SNNYHK) contacts substrate. The Proton acceptor role is filled by Asp-68. Asp-68 contributes to the Mg(2+) binding site. Substrate-binding positions include Ser-69, 147-150 (FGYD), Lys-170, and 175-176 (HR).

This sequence belongs to the HAM1 NTPase family. In terms of assembly, homodimer. Mg(2+) serves as cofactor.

It catalyses the reaction XTP + H2O = XMP + diphosphate + H(+). The enzyme catalyses dITP + H2O = dIMP + diphosphate + H(+). The catalysed reaction is ITP + H2O = IMP + diphosphate + H(+). Functionally, pyrophosphatase that catalyzes the hydrolysis of nucleoside triphosphates to their monophosphate derivatives, with a high preference for the non-canonical purine nucleotides XTP (xanthosine triphosphate), dITP (deoxyinosine triphosphate) and ITP. Seems to function as a house-cleaning enzyme that removes non-canonical purine nucleotides from the nucleotide pool, thus preventing their incorporation into DNA/RNA and avoiding chromosomal lesions. This chain is dITP/XTP pyrophosphatase, found in Acholeplasma laidlawii (strain PG-8A).